The primary structure comprises 252 residues: Trans-aconitate 2-methyltransferase (252 aa).

The protein belongs to the methyltransferase superfamily. Tam family.

Its subcellular location is the cytoplasm. It catalyses the reaction trans-aconitate + S-adenosyl-L-methionine = (E)-3-(methoxycarbonyl)pent-2-enedioate + S-adenosyl-L-homocysteine. Catalyzes the S-adenosylmethionine monomethyl esterification of trans-aconitate. In Escherichia fergusonii (strain ATCC 35469 / DSM 13698 / CCUG 18766 / IAM 14443 / JCM 21226 / LMG 7866 / NBRC 102419 / NCTC 12128 / CDC 0568-73), this protein is Trans-aconitate 2-methyltransferase.